Reading from the N-terminus, the 205-residue chain is Regulator of G-protein signaling 4 (205 aa).

S-palmitoyl cysteine attachment occurs at residues Cys-2, Cys-12, and Cys-95. The region spanning 62–178 (SLENLISHEC…LKSRFYLDLV (117 aa)) is the RGS domain.

In terms of processing, palmitoylated on Cys-2 and/or Cys-12. Phosphorylated by cyclic GMP-dependent protein kinase.

Its function is as follows. Inhibits signal transduction by increasing the GTPase activity of G protein alpha subunits thereby driving them into their inactive GDP-bound form. Activity on G(z)-alpha is inhibited by phosphorylation of the G-protein. Activity on G(z)-alpha and G(i)-alpha-1 is inhibited by palmitoylation of the G-protein. The polypeptide is Regulator of G-protein signaling 4 (RGS4) (Bos taurus (Bovine)).